A 119-amino-acid polypeptide reads, in one-letter code: ATP-dependent Clp protease adapter protein ClpS (119 aa).

The disordered stretch occupies residues 1 to 33; sequence MATRIPKTPSTPPAQKPAGDDGDSVVLERRPQK.

The protein belongs to the ClpS family. In terms of assembly, binds to the N-terminal domain of the chaperone ClpA.

In terms of biological role, involved in the modulation of the specificity of the ClpAP-mediated ATP-dependent protein degradation. The protein is ATP-dependent Clp protease adapter protein ClpS of Variovorax paradoxus (strain S110).